We begin with the raw amino-acid sequence, 393 residues long: Phosphopentomutase (393 aa).

Residues Asp-14, Asp-287, His-292, Asp-328, His-329, and His-340 each contribute to the Mn(2+) site.

Belongs to the phosphopentomutase family. Mn(2+) is required as a cofactor.

It localises to the cytoplasm. It catalyses the reaction 2-deoxy-alpha-D-ribose 1-phosphate = 2-deoxy-D-ribose 5-phosphate. The catalysed reaction is alpha-D-ribose 1-phosphate = D-ribose 5-phosphate. The protein operates within carbohydrate degradation; 2-deoxy-D-ribose 1-phosphate degradation; D-glyceraldehyde 3-phosphate and acetaldehyde from 2-deoxy-alpha-D-ribose 1-phosphate: step 1/2. Functionally, isomerase that catalyzes the conversion of deoxy-ribose 1-phosphate (dRib-1-P) and ribose 1-phosphate (Rib-1-P) to deoxy-ribose 5-phosphate (dRib-5-P) and ribose 5-phosphate (Rib-5-P), respectively. In Geobacillus stearothermophilus (Bacillus stearothermophilus), this protein is Phosphopentomutase.